A 197-amino-acid chain; its full sequence is Rac-like GTP-binding protein 5 (197 aa).

GTP is bound at residue G13–T20. Positions Y35–F43 match the Effector region motif. GTP contacts are provided by residues D60–Q64 and T118–D121. C194 carries the post-translational modification Cysteine methyl ester. The S-geranylgeranyl cysteine moiety is linked to residue C194. Residues A195 to L197 constitute a propeptide, removed in mature form.

This sequence belongs to the small GTPase superfamily. Rho family.

It is found in the cytoplasm. Its subcellular location is the membrane. Functionally, inactive GDP-bound Rho GTPases reside in the cytosol, are found in a complex with Rho GDP-dissociation inhibitors (Rho GDIs), and are released from the GDI protein in order to translocate to membranes upon activation. The polypeptide is Rac-like GTP-binding protein 5 (RAC5) (Oryza sativa subsp. japonica (Rice)).